The chain runs to 2471 residues: Probable polyketide synthase 24 (2471 aa).

Residues 21–449 form the Ketosynthase family 3 (KS3) domain; the sequence is ENLVAIVGVG…GSNCCLVLSQ (429 aa). Active-site for beta-ketoacyl synthase activity residues include Cys-190, His-332, and His-372. The segment at 654–687 is acyl/malonyl transferase; sequence GIKASFMLGHSLGEVTTAYCSGMIDIDQLCYLIY. Residue Ser-664 is the For acyl/malonyl transferase activity of the active site. Residues 953 to 1075 form an N-terminal hotdog fold region; the sequence is ISILGNSMQD…SNFHLNSNDN (123 aa). A PKS/mFAS DH domain is found at 953-1245; it reads ISILGNSMQD…VKSLTPVKDP (293 aa). Residue His-987 is the Proton acceptor; for dehydratase activity of the active site. Positions 1094-1245 are C-terminal hotdog fold; that stretch reads NLSSIPWDEF…VKSLTPVKDP (152 aa). The active-site Proton donor; for dehydratase activity is Asp-1157. Positions 1426–1469 form a coiled coil; the sequence is IINEQQQQQQQQQQQQQQQQQQQQQLLNNENNKESLKNLLVNCN. Residues 2336-2413 enclose the Carrier domain; that stretch reads SSSTNVKNKF…MVYQIINDSL (78 aa). Ser-2373 is subject to O-(pantetheine 4'-phosphoryl)serine.

The cofactor is pantetheine 4'-phosphate.

Probable polyketide synthase. The protein is Probable polyketide synthase 24 (pks24) of Dictyostelium discoideum (Social amoeba).